The following is a 323-amino-acid chain: Ferrochelatase (323 aa).

2 residues coordinate Fe cation: histidine 196 and glutamate 277.

The protein belongs to the ferrochelatase family.

The protein localises to the cytoplasm. The enzyme catalyses heme b + 2 H(+) = protoporphyrin IX + Fe(2+). Its pathway is porphyrin-containing compound metabolism; protoheme biosynthesis; protoheme from protoporphyrin-IX: step 1/1. Catalyzes the ferrous insertion into protoporphyrin IX. This is Ferrochelatase from Haemophilus influenzae (strain ATCC 51907 / DSM 11121 / KW20 / Rd).